A 3387-amino-acid polypeptide reads, in one-letter code: Genome polyprotein (3387 aa).

The Cytoplasmic portion of the chain corresponds to 1–100 (MNQRKKVVRP…LNILNGRKRS (100 aa)). The tract at residues 36–71 (LFSGKGPLRMVLAFITFLRVLSIPPTAGILKRWGQL) is hydrophobic; homodimerization of capsid protein C. A propeptide spans 100-113 (STMTLLCLIPTVMA) (ER anchor for the capsid protein C, removed in mature form by serine protease NS3). A helical membrane pass occupies residues 101-117 (TMTLLCLIPTVMAFHLS). At 118-237 (TRDGEPLMIV…GAWKHAQRVE (120 aa)) the chain is on the extracellular side. N-linked (GlcNAc...) asparagine; by host glycosylation is present at Asn182. A helical membrane pass occupies residues 238–258 (SWILRNPGFALLAGFMAYMIG). The Cytoplasmic segment spans residues 259–265 (QTGIQRT). A helical membrane pass occupies residues 266–279 (VFFVLMMLVAPSYG). The Extracellular portion of the chain corresponds to 280-723 (MRCVGVGNRD…AVHQVFGSVY (444 aa)). 4 cysteine pairs are disulfide-bonded: Cys282-Cys309, Cys339-Cys400, Cys353-Cys384, and Cys371-Cys395. A glycan (N-linked (GlcNAc...) asparagine; by host) is linked at Asn346. Positions 377–390 (DRGWGNGCGLFGKG) are fusion peptide. Asn432 carries an N-linked (GlcNAc...) asparagine; by host glycan. Intrachain disulfides connect Cys464/Cys564 and Cys581/Cys612. A helical transmembrane segment spans residues 724–744 (TTMFGGVSWMVRILIGFLVLW). At 745 to 750 (IGTNSR) the chain is on the cytoplasmic side. A helical membrane pass occupies residues 751 to 771 (NTSMAMTCIAVGGITLFLGFT). The Extracellular segment spans residues 772–1194 (VQADMGCVVS…MLGDTMSGRI (423 aa)). 6 cysteine pairs are disulfide-bonded: Cys778–Cys789, Cys829–Cys917, Cys953–Cys997, Cys1054–Cys1103, Cys1065–Cys1087, and Cys1086–Cys1090. Asn904 and Asn981 each carry an N-linked (GlcNAc...) asparagine; by host glycan. Residues 1195–1218 (GGQVHLAIMAVFKMSPGYVLGVFL) form a helical membrane-spanning segment. Topologically, residues 1219–1224 (RKLTSR) are lumenal. The chain crosses the membrane as a helical span at residues 1225–1243 (ETALMVIGMAMTTVLSIPH). The Cytoplasmic segment spans residues 1244–1267 (DLMELIDGISLGLILLKIVTQFDN). A helical transmembrane segment spans residues 1268–1288 (TQVGTLALSLTFIRSTMPLVM). Residue Ala1289 is a topological domain, lumenal. A helical transmembrane segment spans residues 1290 to 1308 (WRTIMAVLFVVTLIPLCRT). Over 1309–1316 (SCLQKQSH) the chain is Lumenal. Residues 1317-1337 (WVEITALILGAQALPVYLMTL) traverse the membrane as a helical segment. The Cytoplasmic portion of the chain corresponds to 1338-1345 (MKGASRRS). The helical transmembrane segment at 1346–1366 (WPLNEGIMAVGLVSLLGSALL) threads the bilayer. Topologically, residues 1367 to 1369 (KND) are lumenal. A helical membrane pass occupies residues 1370–1390 (VPLAGPMVAGGLLLAAYVMSG). Residues 1391–1437 (SSADLSLEKAANVQWDEMADITGSSPIIEVKQDEDGSFSIRDVEETN) are Cytoplasmic-facing. Positions 1397–1436 (LEKAANVQWDEMADITGSSPIIEVKQDEDGSFSIRDVEET) are interacts with and activates NS3 protease. The segment at residues 1438–1458 (MITLLVKLALITVSGLYPLAI) is an intramembrane region (helical). Topologically, residues 1459-2143 (PVTMTLWYMW…QHALNELPES (685 aa)) are cytoplasmic. The 178-residue stretch at 1475 to 1652 (SGALWDVPSP…ERIGEPDYEV (178 aa)) folds into the Peptidase S7 domain. Active-site charge relay system; for serine protease NS3 activity residues include His1525, Asp1549, and Ser1609. Positions 1654-1810 (EDIFRKKRLT…QSNSPIEDIE (157 aa)) constitute a Helicase ATP-binding domain. The interval 1658-1661 (RKKR) is important for RNA-binding. ATP is bound at residue 1667-1674 (LHPGAGKT). Residues 1758-1761 (DEAH) carry the DEAH box motif. Residues 1820-1987 (TGFDWITDYQ…IIPTLFGPER (168 aa)) enclose the Helicase C-terminal domain. Lys1862 bears the N6-acetyllysine; by host mark. Residues 2144 to 2164 (LETLMLVALLGAMTAGTFLFF) form a helical membrane-spanning segment. The Lumenal portion of the chain corresponds to 2165 to 2169 (MQGKG). Residues 2170–2190 (IGKLSMGLITIAVASGLLWVA) constitute an intramembrane region (helical). Glu2191 is a topological domain (lumenal). The helical transmembrane segment at 2192–2212 (LQPQWIAASIILEFFLMVLLI) threads the bilayer. Residues 2213–2225 (PEPEKQRTPQDNQ) lie on the Cytoplasmic side of the membrane. A helical transmembrane segment spans residues 2226–2246 (LIYVILTILTIIGLIAANEMG). At 2247–2270 (LIEKTKTDFGFYQVKTETTILDVD) the chain is on the lumenal side. The helical intramembrane region spans 2271 to 2291 (LRPASAWTLYAVATTILTPML). Over 2292 to 2301 (RHTIENTSAN) the chain is Lumenal. N-linked (GlcNAc...) asparagine; by host glycosylation is found at Asn2297 and Asn2301. An intramembrane region (helical) is located at residues 2302–2322 (LSLAAIANQAAVLMGLGKGWP). Over 2323-2343 (LHRVDLGVPLLAMGCYSQVNP) the chain is Lumenal. A helical membrane pass occupies residues 2344–2364 (TTLTASLVMLLVHYAIIGPGL). Residues 2365–2409 (QAKATREAQKRTAAGIMKNPTVDGITVIDLEPISYDPKFEKQLGQ) are Cytoplasmic-facing. The helical transmembrane segment at 2410-2430 (VMLLVLCAGQLLLMRTTWAFC) threads the bilayer. Residues 2431–2455 (EVLTLATGPILTLWEGNPGRFWNTT) lie on the Lumenal side of the membrane. Asn2453 carries an N-linked (GlcNAc...) asparagine; by host glycan. A helical transmembrane segment spans residues 2456–2476 (IAVSTANIFRGSYLAGAGLAF). Residues 2477-3387 (SLIKNAQTPR…SAPSESEGVL (911 aa)) lie on the Cytoplasmic side of the membrane. The 263-residue stretch at 2489 to 2751 (TGTTGETLGE…DVDLGAGTRS (263 aa)) folds into the mRNA cap 0-1 NS5-type MT domain. Ser2543 contributes to the S-adenosyl-L-methionine binding site. Ser2543 carries the phosphoserine modification. Residue Lys2548 is the For 2'-O-MTase activity of the active site. The short motif at 2564 to 2567 (VVDL) is the SUMO-interacting motif element. The S-adenosyl-L-methionine site is built by Gly2573, Trp2574, Thr2591, Lys2592, Asp2618, and Val2619. The active-site For 2'-O-MTase activity is the Asp2633. Ile2634 lines the S-adenosyl-L-methionine pocket. Residues Lys2668 and Glu2704 each act as for 2'-O-MTase activity in the active site. Residue Tyr2706 coordinates S-adenosyl-L-methionine. Zn(2+) contacts are provided by Glu2925, His2929, Cys2934, and Cys2937. A RdRp catalytic domain is found at 3016-3166 (LMYADDTAGW…PLDERFSTSL (151 aa)). Positions 3200, 3216, and 3335 each coordinate Zn(2+).

In the N-terminal section; belongs to the class I-like SAM-binding methyltransferase superfamily. mRNA cap 0-1 NS5-type methyltransferase family. As to quaternary structure, homodimer. Interacts (via N-terminus) with host EXOC1 (via C-terminus); this interaction results in EXOC1 degradation through the proteasome degradation pathway. In terms of assembly, forms heterodimers with envelope protein E in the endoplasmic reticulum and Golgi. Homodimer; in the endoplasmic reticulum and Golgi. Interacts with protein prM. Interacts with non-structural protein 1. As to quaternary structure, homodimer; Homohexamer when secreted. Interacts with envelope protein E. In terms of assembly, interacts (via N-terminus) with serine protease NS3. Forms a heterodimer with serine protease NS3. May form homooligomers. As to quaternary structure, forms a heterodimer with NS2B. Interacts with NS4B. Interacts with unphosphorylated RNA-directed RNA polymerase NS5; this interaction stimulates RNA-directed RNA polymerase NS5 guanylyltransferase activity. Interacts with host SHFL. In terms of assembly, interacts with host MAVS; this interaction inhibits the synthesis of IFN-beta. Interacts with host SHFL. Interacts with host AUP1; the interaction occurs in the presence of Dengue virus NS4B and induces lipophagy which facilitates production of virus progeny particles. Interacts with serine protease NS3. As to quaternary structure, homodimer. Interacts with host STAT2; this interaction inhibits the phosphorylation of the latter, and, when all viral proteins are present (polyprotein), targets STAT2 for degradation. Interacts with serine protease NS3. Interacts with host PAF1 complex; the interaction may prevent the recruitment of the PAF1 complex to interferon-responsive genes, and thus reduces the immune response. Specific enzymatic cleavages in vivo yield mature proteins. Cleavages in the lumen of endoplasmic reticulum are performed by host signal peptidase, whereas cleavages in the cytoplasmic side are performed by serine protease NS3. Signal cleavage at the 2K-4B site requires a prior NS3 protease-mediated cleavage at the 4A-2K site. Post-translationally, cleaved in post-Golgi vesicles by a host furin, releasing the mature small envelope protein M, and peptide pr. This cleavage is incomplete as up to 30% of viral particles still carry uncleaved prM. In terms of processing, N-glycosylated. N-glycosylated. The excreted form is glycosylated and this is required for efficient secretion of the protein from infected cells. Post-translationally, acetylated by host KAT5. Acetylation modulates NS3 RNA-binding and unwinding activities and plays an important positive role for viral replication. In terms of processing, sumoylation of RNA-directed RNA polymerase NS5 increases NS5 protein stability allowing proper viral RNA replication. Phosphorylated on serines residues. This phosphorylation may trigger NS5 nuclear localization.

Its subcellular location is the virion. The protein resides in the host nucleus. It is found in the host cytoplasm. It localises to the host perinuclear region. The protein localises to the secreted. Its subcellular location is the virion membrane. The protein resides in the host endoplasmic reticulum membrane. It is found in the host mitochondrion. It catalyses the reaction Selective hydrolysis of -Xaa-Xaa-|-Yaa- bonds in which each of the Xaa can be either Arg or Lys and Yaa can be either Ser or Ala.. The enzyme catalyses RNA(n) + a ribonucleoside 5'-triphosphate = RNA(n+1) + diphosphate. The catalysed reaction is a ribonucleoside 5'-triphosphate + H2O = a ribonucleoside 5'-diphosphate + phosphate + H(+). It carries out the reaction ATP + H2O = ADP + phosphate + H(+). It catalyses the reaction a 5'-end (5'-triphosphoguanosine)-ribonucleoside in mRNA + S-adenosyl-L-methionine = a 5'-end (N(7)-methyl 5'-triphosphoguanosine)-ribonucleoside in mRNA + S-adenosyl-L-homocysteine. The enzyme catalyses a 5'-end (N(7)-methyl 5'-triphosphoguanosine)-ribonucleoside in mRNA + S-adenosyl-L-methionine = a 5'-end (N(7)-methyl 5'-triphosphoguanosine)-(2'-O-methyl-ribonucleoside) in mRNA + S-adenosyl-L-homocysteine + H(+). Functionally, plays a role in virus budding by binding to the cell membrane and gathering the viral RNA into a nucleocapsid that forms the core of a mature virus particle. During virus entry, may induce genome penetration into the host cytoplasm after hemifusion induced by the surface proteins. Can migrate to the cell nucleus where it modulates host functions. Overcomes the anti-viral effects of host EXOC1 by sequestering and degrading the latter through the proteasome degradation pathway. In terms of biological role, inhibits RNA silencing by interfering with host Dicer. Prevents premature fusion activity of envelope proteins in trans-Golgi by binding to envelope protein E at pH6.0. After virion release in extracellular space, gets dissociated from E dimers. Its function is as follows. Acts as a chaperone for envelope protein E during intracellular virion assembly by masking and inactivating envelope protein E fusion peptide. prM is the only viral peptide matured by host furin in the trans-Golgi network probably to avoid catastrophic activation of the viral fusion activity in acidic Golgi compartment prior to virion release. prM-E cleavage is inefficient, and many virions are only partially matured. These uncleaved prM would play a role in immune evasion. Functionally, may play a role in virus budding. Exerts cytotoxic effects by activating a mitochondrial apoptotic pathway through M ectodomain. May display a viroporin activity. In terms of biological role, binds to host cell surface receptor and mediates fusion between viral and cellular membranes. Envelope protein is synthesized in the endoplasmic reticulum in the form of heterodimer with protein prM. They play a role in virion budding in the ER, and the newly formed immature particle is covered with 60 spikes composed of heterodimer between precursor prM and envelope protein E. The virion is transported to the Golgi apparatus where the low pH causes dissociation of PrM-E heterodimers and formation of E homodimers. prM-E cleavage is inefficient, and many virions are only partially matured. These uncleaved prM would play a role in immune evasion. Involved in immune evasion, pathogenesis and viral replication. Once cleaved off the polyprotein, is targeted to three destinations: the viral replication cycle, the plasma membrane and the extracellular compartment. Essential for viral replication. Required for formation of the replication complex and recruitment of other non-structural proteins to the ER-derived membrane structures. Excreted as a hexameric lipoparticle that plays a role against host immune response. Antagonizing the complement function. Binds to the host macrophages and dendritic cells. Inhibits signal transduction originating from Toll-like receptor 3 (TLR3). Its function is as follows. Disrupts the host endothelial glycocalyx layer of host pulmonary microvascular endothelial cells, inducing degradation of sialic acid and shedding of heparan sulfate proteoglycans. NS1 induces expression of sialidases, heparanase, and activates cathepsin L, which activates heparanase via enzymatic cleavage. These effects are probably linked to the endothelial hyperpermeability observed in severe dengue disease. Functionally, component of the viral RNA replication complex that functions in virion assembly and antagonizes the host immune response. In terms of biological role, required cofactor for the serine protease function of NS3. May have membrane-destabilizing activity and form viroporins. Displays three enzymatic activities: serine protease, NTPase and RNA helicase. NS3 serine protease, in association with NS2B, performs its autocleavage and cleaves the polyprotein at dibasic sites in the cytoplasm: C-prM, NS2A-NS2B, NS2B-NS3, NS3-NS4A, NS4A-2K and NS4B-NS5. NS3 RNA helicase binds RNA and unwinds dsRNA in the 3' to 5' direction. Its function is as follows. Regulates the ATPase activity of the NS3 helicase activity. NS4A allows NS3 helicase to conserve energy during unwinding. Plays a role in the inhibition of the host innate immune response. Interacts with host MAVS and thereby prevents the interaction between RIGI and MAVS. In turn, IFN-beta production is impaired. Interacts with host AUP1 which mediates induction of lipophagy in host cells and facilitates production of virus progeny particles. Functionally, functions as a signal peptide for NS4B and is required for the interferon antagonism activity of the latter. In terms of biological role, induces the formation of ER-derived membrane vesicles where the viral replication takes place. Inhibits interferon (IFN)-induced host STAT1 phosphorylation and nuclear translocation, thereby preventing the establishment of cellular antiviral state by blocking the IFN-alpha/beta pathway. Replicates the viral (+) and (-) RNA genome, and performs the capping of genomes in the cytoplasm. NS5 methylates viral RNA cap at guanine N-7 and ribose 2'-O positions. Besides its role in RNA genome replication, also prevents the establishment of cellular antiviral state by blocking the interferon-alpha/beta (IFN-alpha/beta) signaling pathway. Inhibits host TYK2 and STAT2 phosphorylation, thereby preventing activation of JAK-STAT signaling pathway. May reduce immune responses by preventing the recruitment of the host PAF1 complex to interferon-responsive genes. The polypeptide is Genome polyprotein (Dengue virus type 4 (strain Singapore/8976/1995) (DENV-4)).